Here is a 514-residue protein sequence, read N- to C-terminus: FAD-dependent monooxygenase CPUR_05423 (514 aa).

Positions 79 and 146 each coordinate FAD. Residue Arg227 is part of the active site. FAD-binding residues include Asp358 and Gly371.

Belongs to the paxM FAD-dependent monooxygenase family. Requires FAD as cofactor.

Its pathway is pigment biosynthesis. Its function is as follows. FAD-dependent monooxygenase; part of the ergochrome gene cluster responsible for the typical purple-black color of the ergot sclerotia. The ergochrome gene cluster produces several ergot pigments including the yellow ergochrome secalonic acid and its derivatives, as well as the red anthraquinones endocrocin and clavorubin. The pathway begins with the synthesis of atrochrysone thioester by the polyketide synthase (PKS) CPUR_05437. The atrochrysone carboxyl ACP thioesterase CPUR_05436 then breaks the thioester bond and releases the atrochrysone carboxylic acid from CPUR_05437. The atrochrysone carboxylic acid is then converted to atrochrysone which is further transformed into emodin anthrone. The next step is performed by the anthrone oxygenase CPUR_05434 that catalyzes the oxidation of emodinanthrone to emodin. Emodin is further modified to yield monodictyphenone via several steps involving CPUR_05427, CPUR_05428, CPUR_05429 and CPUR_05430. The short chain dehydrogenase/reductase CPUR_05418 then catalyzes the C-5 ketoreduction to give the xanthone skeleton of the monomeric units. Ergochromes formation requires further dimerization steps of different xanthone units, probably catalyzed by the cytochrome P450 monooxygenase CPUR_05419. CPUR_05425, CPUR_05426 and CPUR_05431 are unique to Claviceps, thus it is likely that they are involved in further modification of xanthone units or in their dimerization. The yellow ergochromes and the red anthraquinone pigments endocrocin and clavorubin are products from the same PKS derived precursors and the latter are likely shunt products in the pathway of xanthone biosynthesis. It is proposed that atrochrysone carboxylic acid released from the PKS CPUR_05437 can also be converted to endocrocin anthrone which is further oxidized into endocrocin by CPUR_05435. Endocrocin could be then modified to clavorubin, possibly by CPUR_05423 and CPUR_05431. Clavorubin is the principal anthraquinone metabolite produced by the cluster with a much higher yield compared to endocrocin. The chain is FAD-dependent monooxygenase CPUR_05423 from Claviceps purpurea (strain 20.1) (Ergot fungus).